Consider the following 609-residue polypeptide: Autophagy-related protein 22-1 (609 aa).

The next 4 helical transmembrane spans lie at 35–55 (YGWAAEVFTVCAMGSFLPITL), 117–137 (TASFAMYTFSVSVFIQAILII), 151–171 (LLLMAFAVIGSVSTMLFLGVV), and 176–196 (MVGAVIAIIANTCFGASFVLL). Over residues 214–231 (AREPRPALDDSRAQEGHS) the composition is skewed to basic and acidic residues. The disordered stretch occupies residues 214–240 (AREPRPALDDSRAQEGHSDTTNGIEHG). A glycan (N-linked (GlcNAc...) asparagine) is linked at asparagine 244. The chain crosses the membrane as a helical span at residues 287-307 (IGIGYIGAIILQIVCILVVIA). N-linked (GlcNAc...) asparagine glycosylation occurs at asparagine 309. Helical transmembrane passes span 317 to 337 (LVLFLIGLWWFIFSIPAALWL), 381 to 401 (ILLFLAAWLLLSDGIATVSGT), and 415 to 435 (AALGLINVIAMVAGVLGAFSW). N-linked (GlcNAc...) asparagine glycosylation occurs at asparagine 443. 4 helical membrane passes run 450–470 (IIACILLFELVPLYGLLGFIP), 477–497 (FLGLQQPWEMFPLGIVYGLVM), 522–542 (ALYAITDKGSSIFGPTIVGII), and 552–572 (AFVFLAILIFLPLPLMLLVDV).

This sequence belongs to the ATG22 family.

It localises to the vacuole membrane. Its function is as follows. Vacuolar effluxer which mediate the efflux of amino acids resulting from autophagic degradation. The release of autophagic amino acids allows the maintenance of protein synthesis and viability during nitrogen starvation. In Aspergillus fumigatus (strain ATCC MYA-4609 / CBS 101355 / FGSC A1100 / Af293) (Neosartorya fumigata), this protein is Autophagy-related protein 22-1 (atg22-1).